Reading from the N-terminus, the 383-residue chain is Succinyl-diaminopimelate desuccinylase (383 aa).

H73 contributes to the Zn(2+) binding site. Residue D75 is part of the active site. D107 contributes to the Zn(2+) binding site. The active-site Proton acceptor is E141. Zn(2+) is bound by residues E142, E170, and H356.

The protein belongs to the peptidase M20A family. DapE subfamily. In terms of assembly, homodimer. Zn(2+) serves as cofactor. It depends on Co(2+) as a cofactor.

The catalysed reaction is N-succinyl-(2S,6S)-2,6-diaminopimelate + H2O = (2S,6S)-2,6-diaminopimelate + succinate. The protein operates within amino-acid biosynthesis; L-lysine biosynthesis via DAP pathway; LL-2,6-diaminopimelate from (S)-tetrahydrodipicolinate (succinylase route): step 3/3. Functionally, catalyzes the hydrolysis of N-succinyl-L,L-diaminopimelic acid (SDAP), forming succinate and LL-2,6-diaminopimelate (DAP), an intermediate involved in the bacterial biosynthesis of lysine and meso-diaminopimelic acid, an essential component of bacterial cell walls. This Pseudomonas aeruginosa (strain ATCC 15692 / DSM 22644 / CIP 104116 / JCM 14847 / LMG 12228 / 1C / PRS 101 / PAO1) protein is Succinyl-diaminopimelate desuccinylase.